A 412-amino-acid polypeptide reads, in one-letter code: G-protein coupled receptor homolog UL33 (412 aa).

The Virion surface portion of the chain corresponds to 1 to 29; that stretch reads MDTIIHNSTRNNTPPHINDTCNMTGPLFA. Residues Asn7, Asn18, and Asn22 are each glycosylated (N-linked (GlcNAc...) asparagine; by host). Residues 30–54 traverse the membrane as a helical segment; the sequence is IRTTEAVLNTFIIFVGGPLNAIVLI. Over 55-70 the chain is Intravirion; it reads TQLLTNRVLGYSTPTI. A helical transmembrane segment spans residues 71 to 95; it reads YMTNLYSTNFLTLTVLPFIVLSNQW. The Virion surface portion of the chain corresponds to 96–102; it reads LLPAGVA. Residues 103–129 traverse the membrane as a helical segment; the sequence is SCKFLSVIYYSSCTVGFATVALIAADR. The cysteines at positions 104 and 188 are disulfide-linked. Residues 130–138 lie on the Intravirion side of the membrane; it reads YRVLHKRTY. The chain crosses the membrane as a helical span at residues 139 to 160; that stretch reads ARQSYRSTYMILLLTWLAGLIF. The Virion surface portion of the chain corresponds to 161 to 203; it reads SVPAAVYTTVVMHHDANDTNNTNGHATCVLYFVAEEVHTVLLS. Asn177 and Asn180 each carry an N-linked (GlcNAc...) asparagine; by host glycan. The chain crosses the membrane as a helical span at residues 204 to 224; sequence WKVLLTMVWGAAPVIMMTWFY. Residues 225–240 are Intravirion-facing; that stretch reads AFFYSTVQRTSQKQRS. Residues 241–267 traverse the membrane as a helical segment; it reads RTLTFVSVLLISFVALQTPYVSLMIFN. Over 268-281 the chain is Virion surface; that stretch reads SYATTAWPMQCEHL. Residues 282–305 traverse the membrane as a helical segment; it reads TLRRTIGTLARVVPHLHCLINPIL. At 306-412 the chain is on the intravirion side; sequence YALLGHDFLQ…SQSHHNLSGV (107 aa). The interval 377–412 is disordered; sequence NFPSGTWKGGQKTASNDTSTKIPHRLSQSHHNLSGV. Positions 388 to 397 are enriched in polar residues; that stretch reads KTASNDTSTK.

This sequence belongs to the G-protein coupled receptor 1 family. As to quaternary structure, heterodimerizes with US28.

The protein localises to the virion. It is found in the host cell membrane. Its subcellular location is the host cytoplasm. G-protein-coupled receptor (vGPCR) that constitutively activates multiple oncogenic signaling pathways including STAT3, AP-1, phospholipase C, NF-kappa-B or cAMP-responsive element (CRE) pathways. Plays an important role in viral reactivation from latency through activation of host CREB1, facilitating its recruitment to the viral major immediate early (MIE) genes. In turn, expression of the MIE-driven genes such as UL123 are de-repressed. Also facilitates virus dissemination via the extracellular and cell-to-cell route. This Human cytomegalovirus (strain AD169) (HHV-5) protein is G-protein coupled receptor homolog UL33 (UL33).